A 927-amino-acid polypeptide reads, in one-letter code: Roc-COR-CHAT protease (927 aa).

LRR repeat units lie at residues 38-61 (AGQV…TEAQ), 83-107 (LPHL…GFRS), 109-125 (QQVY…VFEG), and 127-151 (CPAL…GFRA). The interval 152–170 (LKYIYATNNVLQKITFNRS) is LRR 5. LRR repeat units follow at residues 171–194 (MRLL…LSEI) and 195–217 (ETME…IWDR). In terms of domain architecture, COR spans 436 to 623 (EWLGVKEDLN…ELRWKKGVVL (188 aa)). Residues His796 and Cys840 contribute to the active site.

Its function is as follows. A dedicated protease for gasdermin bGSDM; cleaves the bGSDM precursor, releasing the pore-forming moiety, which integrates into the membrane and triggers cell death. Probably involved in defense against bacteriophages. Expression of bGSDM and this neighboring protease is highly toxic in E.coli. Cells expressing the gene pair stop dividing and lose membrane integrity. Both proteins are required to kill E.coli. The bGSDM recognition site is larger than the 8 residues surrounding the cleavage site; replacement of the endogenous recognition site by the Runella site (NRVLGENM) in a number of other bGSDMs is not sufficient for them to be cleaved. The chain is Roc-COR-CHAT protease from Runella zeae (strain ATCC BAA-293 / DSM 19591 / LMG 21438 / NS12).